The primary structure comprises 135 residues: Antennal-specific protein OS-C (135 aa).

Residues 1 to 27 form the signal peptide; sequence MGFHMGRQLLLSGFLLVMLQMVTQTQA. Residues 43 to 84 form a disordered region; it reads VIKREGDDDGDDDDSSSEETVEDSEESRRRRREVNTDNTPSA. Positions 49-67 are enriched in acidic residues; sequence DDDGDDDDSSSEETVEDSE.

Antenna. In the third antennal segment. Expressed in sencilla coeloconica.

In Drosophila melanogaster (Fruit fly), this protein is Antennal-specific protein OS-C (Os-C).